A 419-amino-acid polypeptide reads, in one-letter code: Adenylosuccinate synthetase (419 aa).

GTP-binding positions include 11 to 17 and 39 to 41; these read GDEGKGK and GHS. Catalysis depends on aspartate 12, which acts as the Proton acceptor. Residues aspartate 12 and glycine 39 each coordinate Mg(2+). IMP contacts are provided by residues 12-15, 37-40, threonine 129, arginine 143, asparagine 221, threonine 236, and arginine 296; these read DEGK and NAGH. The active-site Proton donor is the histidine 40. 292-298 provides a ligand contact to substrate; it reads VSTGRKR. GTP is bound by residues arginine 298, 324–326, and 408–410; these read KLD and GTG.

The protein belongs to the adenylosuccinate synthetase family. Homodimer. The cofactor is Mg(2+).

The protein localises to the cytoplasm. The enzyme catalyses IMP + L-aspartate + GTP = N(6)-(1,2-dicarboxyethyl)-AMP + GDP + phosphate + 2 H(+). The protein operates within purine metabolism; AMP biosynthesis via de novo pathway; AMP from IMP: step 1/2. Plays an important role in the de novo pathway and in the salvage pathway of purine nucleotide biosynthesis. Catalyzes the first committed step in the biosynthesis of AMP from IMP. The protein is Adenylosuccinate synthetase of Chaetomium globosum (strain ATCC 6205 / CBS 148.51 / DSM 1962 / NBRC 6347 / NRRL 1970) (Soil fungus).